We begin with the raw amino-acid sequence, 266 residues long: 3-methyl-2-oxobutanoate hydroxymethyltransferase (266 aa).

Asp-45 and Asp-84 together coordinate Mg(2+). 3-methyl-2-oxobutanoate is bound by residues 45-46 (DS), Asp-84, and Lys-112. Residue Glu-114 coordinates Mg(2+). Residue Glu-181 is the Proton acceptor of the active site.

Belongs to the PanB family. In terms of assembly, homodecamer; pentamer of dimers. Mg(2+) serves as cofactor.

It localises to the cytoplasm. The catalysed reaction is 3-methyl-2-oxobutanoate + (6R)-5,10-methylene-5,6,7,8-tetrahydrofolate + H2O = 2-dehydropantoate + (6S)-5,6,7,8-tetrahydrofolate. It functions in the pathway cofactor biosynthesis; (R)-pantothenate biosynthesis; (R)-pantoate from 3-methyl-2-oxobutanoate: step 1/2. Catalyzes the reversible reaction in which hydroxymethyl group from 5,10-methylenetetrahydrofolate is transferred onto alpha-ketoisovalerate to form ketopantoate. This is 3-methyl-2-oxobutanoate hydroxymethyltransferase from Pseudomonas savastanoi pv. phaseolicola (strain 1448A / Race 6) (Pseudomonas syringae pv. phaseolicola (strain 1448A / Race 6)).